The primary structure comprises 1229 residues: Putative cell division cycle ATPase (1229 aa).

Positions 252–267 (GKKNNNGNVKKGIKNV) are enriched in low complexity. The interval 252–315 (GKKNNNGNVK…GGKNNSYYNE (64 aa)) is disordered. Residues 268 to 281 (PMDEKSYSPNDHDN) are compositionally biased toward basic and acidic residues. Residues 282-314 (NSNNSNNNNNNDNNNSNNNNNNNNGGKNNSYYN) are compositionally biased toward low complexity. 568–575 (GIPGTGKT) lines the ATP pocket. Disordered regions lie at residues 814–837 (TLLQNDKNEMNKDSSYDKKTDALD) and 860–892 (FSNDDEETKNKNKTNVNQKKKKNPNDKLDKNER). Composition is skewed to basic and acidic residues over residues 819-837 (DKNEMNKDSSYDKKTDALD) and 882-892 (NPNDKLDKNER). Position 975–982 (975–982 (GPPGCGKT)) interacts with ATP.

The protein belongs to the AAA ATPase family.

This chain is Putative cell division cycle ATPase, found in Plasmodium falciparum (isolate 3D7).